A 111-amino-acid chain; its full sequence is Large ribosomal subunit protein uL29 (111 aa).

The segment at 1–85 (MTVAKELRQK…TKKTNEAAVN (85 aa)) is large ribosomal subunit protein uL29. A unknown region spans residues 86-111 (AWKQHLEANKAKLLKSRAKREDASKK).

This sequence belongs to the universal ribosomal protein uL29 family.

This Mycoplasma pneumoniae (strain ATCC 29342 / M129 / Subtype 1) (Mycoplasmoides pneumoniae) protein is Large ribosomal subunit protein uL29.